Reading from the N-terminus, the 106-residue chain is Cell division topological specificity factor (106 aa).

It belongs to the MinE family.

Its function is as follows. Prevents the cell division inhibition by proteins MinC and MinD at internal division sites while permitting inhibition at polar sites. This ensures cell division at the proper site by restricting the formation of a division septum at the midpoint of the long axis of the cell. The sequence is that of Cell division topological specificity factor from Prochlorococcus marinus subsp. pastoris (strain CCMP1986 / NIES-2087 / MED4).